Consider the following 200-residue polypeptide: FMN-dependent NADH:quinone oxidoreductase (200 aa).

FMN contacts are provided by residues Ser-10 and 95-98 (MYNF).

The protein belongs to the azoreductase type 1 family. Homodimer. It depends on FMN as a cofactor.

The enzyme catalyses 2 a quinone + NADH + H(+) = 2 a 1,4-benzosemiquinone + NAD(+). It catalyses the reaction N,N-dimethyl-1,4-phenylenediamine + anthranilate + 2 NAD(+) = 2-(4-dimethylaminophenyl)diazenylbenzoate + 2 NADH + 2 H(+). Its function is as follows. Quinone reductase that provides resistance to thiol-specific stress caused by electrophilic quinones. Functionally, also exhibits azoreductase activity. Catalyzes the reductive cleavage of the azo bond in aromatic azo compounds to the corresponding amines. The sequence is that of FMN-dependent NADH:quinone oxidoreductase from Alteromonas mediterranea (strain DSM 17117 / CIP 110805 / LMG 28347 / Deep ecotype).